Reading from the N-terminus, the 298-residue chain is Glutamyl-Q tRNA(Asp) synthetase (298 aa).

L-glutamate is bound by residues 9–13 (RFAPS) and E45. The 'HIGH' region motif lies at 12-22 (PSPSGELHFGS). The Zn(2+) site is built by C101, C103, Y115, and C119. Residues Y172 and R190 each coordinate L-glutamate. Positions 228-232 (KLSKQ) match the 'KMSKS' region motif. K231 lines the ATP pocket.

It belongs to the class-I aminoacyl-tRNA synthetase family. GluQ subfamily. Zn(2+) serves as cofactor.

Catalyzes the tRNA-independent activation of glutamate in presence of ATP and the subsequent transfer of glutamate onto a tRNA(Asp). Glutamate is transferred on the 2-amino-5-(4,5-dihydroxy-2-cyclopenten-1-yl) moiety of the queuosine in the wobble position of the QUC anticodon. This Salmonella typhimurium (strain LT2 / SGSC1412 / ATCC 700720) protein is Glutamyl-Q tRNA(Asp) synthetase.